Here is a 333-residue protein sequence, read N- to C-terminus: Phosphate acyltransferase (333 aa).

The protein belongs to the PlsX family. In terms of assembly, homodimer. Probably interacts with PlsY.

The protein localises to the cytoplasm. The catalysed reaction is a fatty acyl-[ACP] + phosphate = an acyl phosphate + holo-[ACP]. The protein operates within lipid metabolism; phospholipid metabolism. Its function is as follows. Catalyzes the reversible formation of acyl-phosphate (acyl-PO(4)) from acyl-[acyl-carrier-protein] (acyl-ACP). This enzyme utilizes acyl-ACP as fatty acyl donor, but not acyl-CoA. The chain is Phosphate acyltransferase from Ligilactobacillus salivarius (strain UCC118) (Lactobacillus salivarius).